We begin with the raw amino-acid sequence, 584 residues long: Outer membrane transporter CdiB-2 (584 aa).

A signal peptide spans 1–20 (MATRFAILPVTALITLTAQA). A compositionally biased stretch (low complexity) spans 24–44 (PTPNDQAAAARANAEQNQQAQ). Residues 24-72 (PTPNDQAAAARANAEQNQQAQQRRDAQQRDATVQAPGVRSDVPRPEAYP) form a disordered region. The 74-residue stretch at 98–171 (SKAQGASALP…GALKLALIPG (74 aa)) folds into the POTRA domain.

It belongs to the TPS (TC 1.B.20) family.

The protein localises to the cell outer membrane. Potential outer membrane protein component of a toxin-immunity protein module, which functions as a cellular contact-dependent growth inhibition (CDI) system. CDI modules allow bacteria to communicate with and inhibit the growth of closely related neighboring bacteria in a contact-dependent fashion. This protein may be required for secretion and assembly of the CdiA toxin protein. Its function is as follows. Expression of this cdiAIB locus in B.thailandensis confers protection against other bacteria carrying the locus; growth inhibition requires cellular contact. Functionally, probable member of a two partner secretion pathway (TPS) in which it mediates the secretion of CdiA2. This chain is Outer membrane transporter CdiB-2 (cdiB2), found in Burkholderia pseudomallei (strain 1026b).